A 737-amino-acid polypeptide reads, in one-letter code: MENMAEEELLPQEKVEVVQVPVPTPTPDSARVPAPAPDSAPVSASTPAPASAPTPASAPVPAPALAQASALSPSLASAPDEAESKRHISIQRQLADLEKLAFVTEGDCDSANSLNSDNLDAGNKQACPLCPKEKFRACNSHKLHRHLQNLHWKVSVEFEGYRMCICHLPCRPVKPNIIGEQISSKMGAHYHCIICSATITRRTDMLGHVRRHVNKGETKSRYIAASAAKPPKEILKEADTDVQVCPNYTVPQKTDSYFNPKMKLNRQLIFCTLAALAKERKPLECLDAFGATGIMGLQWAKHLGNAVKVTINDLNENSVTLIQENCHLNKLKVVVDSKEKEEREDILEEGEENLGNIKVTKMDANVLMHLRSFDFIHLDPFGTSVNYLDSAFRNIRNLGIVSVTSTDISSLYAKAQHVARRHYGCNIVRTEYYKELAARIVVAAVARAAARCNKGIEVLFAVALEHFVLVVVRVLRGPTSADETAKKIQYLIHCQWCEERIFQKDGNMVEENPYRQLPCNCHGSMPGKTAIELGPLWSSSLFNTGFLKRMLSESLHHGLDDIQTLIKTLIFESECTPQFSVHAPSNLNKPEECGVFIKTTDDTTTDSHSAQGKRKSNETTANLVKRQKTDVNTEHPPFYYNIHRHSIKGMNMPKLKKFLCYLSQAGFRVSRTHFDPMGVRTDAPLMQFKSILLKYSTPTYTGGQSEGHVQPASEDTVADRVEMSVNDKAEAGGCRRW.

Residues 1-10 (MENMAEEELL) are compositionally biased toward acidic residues. The tract at residues 1–65 (MENMAEEELL…ASAPVPAPAL (65 aa)) is disordered. Low complexity predominate over residues 17 to 49 (VVQVPVPTPTPDSARVPAPAPDSAPVSASTPAP). Threonine 24 carries the post-translational modification Phosphothreonine. The segment covering 50 to 62 (ASAPTPASAPVPA) has biased composition (pro residues). Serine 72 carries the phosphoserine modification. Positions 141 to 145 (HKLHR) match the Nucleolar localization signal motif. Residues 190 to 212 (YHCIICSATITRRTDMLGHVRRH) form a C2H2-type zinc finger. Positions 233 to 692 (EILKEADTDV…APLMQFKSIL (460 aa)) constitute a Trm1 methyltransferase domain. S-adenosyl-L-methionine contacts are provided by arginine 266, aspartate 313, aspartate 363, and alanine 364. Cysteine 494, cysteine 497, cysteine 519, and cysteine 521 together coordinate Zn(2+). Lysine 589 participates in a covalent cross-link: Glycyl lysine isopeptide (Lys-Gly) (interchain with G-Cter in SUMO2). At serine 616 the chain carries Phosphoserine.

Belongs to the class I-like SAM-binding methyltransferase superfamily. Trm1 family.

It is found in the nucleus. Its subcellular location is the nucleolus. It catalyses the reaction guanosine(27) in tRNA(Tyr) + 2 S-adenosyl-L-methionine = N(2)-dimethylguanosine(27) in tRNA(Tyr) + 2 S-adenosyl-L-homocysteine + 2 H(+). In terms of biological role, specifically dimethylates a single guanine residue at position 27 of tRNA(Tyr) using S-adenosyl-L-methionine as donor of the methyl groups. Dimethylation at position 27 of tRNA(Tyr) is required for efficient translation of tyrosine codons. Also required to maintain 3-(3-amino-3-carboxypropyl)uridine (acp3U) in the D-loop of several cytoplasmic tRNAs. This Bos taurus (Bovine) protein is tRNA (guanine(27)-N(2))-dimethyltransferase (TRMT1L).